The chain runs to 107 residues: Putative nucleosome assembly protein 1-like 6 (107 aa).

The protein belongs to the nucleosome assembly protein (NAP) family.

The sequence is that of Putative nucleosome assembly protein 1-like 6 from Homo sapiens (Human).